A 181-amino-acid polypeptide reads, in one-letter code: ATP-dependent protease subunit HslV (181 aa).

The active site involves T5. Na(+)-binding residues include S162, C165, and T168.

Belongs to the peptidase T1B family. HslV subfamily. As to quaternary structure, a double ring-shaped homohexamer of HslV is capped on each side by a ring-shaped HslU homohexamer. The assembly of the HslU/HslV complex is dependent on binding of ATP.

The protein resides in the cytoplasm. It catalyses the reaction ATP-dependent cleavage of peptide bonds with broad specificity.. With respect to regulation, allosterically activated by HslU binding. Functionally, protease subunit of a proteasome-like degradation complex believed to be a general protein degrading machinery. This Campylobacter hominis (strain ATCC BAA-381 / DSM 21671 / CCUG 45161 / LMG 19568 / NCTC 13146 / CH001A) protein is ATP-dependent protease subunit HslV.